Here is a 198-residue protein sequence, read N- to C-terminus: Beta-crystallin A1 (198 aa).

Residues 1–13 (MAQINPLPVPLGP) are N-terminal arm. Beta/gamma crystallin 'Greek key' domains follow at residues 14 to 53 (WKIT…KVEC) and 54 to 100 (GGWI…RPIC). The connecting peptide stretch occupies residues 101–106 (SANHKE). Beta/gamma crystallin 'Greek key' domains lie at 107-148 (SKLV…KVQC) and 149-197 (GSWV…RRIQ).

The protein belongs to the beta/gamma-crystallin family. As to quaternary structure, homo/heterodimer, or complexes of higher-order. The structure of beta-crystallin oligomers seems to be stabilized through interactions between the N-terminal arms.

Functionally, crystallins are the dominant structural components of the vertebrate eye lens. The sequence is that of Beta-crystallin A1 from Rana temporaria (European common frog).